A 491-amino-acid polypeptide reads, in one-letter code: 3-octaprenyl-4-hydroxybenzoate carboxy-lyase (491 aa).

Asn-172 lines the Mn(2+) pocket. Residues Ile-175–Arg-177, Arg-189–Leu-191, and Arg-194–Gly-195 contribute to the prenylated FMN site. Position 238 (Glu-238) interacts with Mn(2+). Asp-287 functions as the Proton donor in the catalytic mechanism.

The protein belongs to the UbiD family. In terms of assembly, homohexamer. The cofactor is prenylated FMN. Mn(2+) is required as a cofactor.

The protein resides in the cell membrane. The enzyme catalyses a 4-hydroxy-3-(all-trans-polyprenyl)benzoate + H(+) = a 2-(all-trans-polyprenyl)phenol + CO2. It participates in cofactor biosynthesis; ubiquinone biosynthesis. Functionally, catalyzes the decarboxylation of 3-octaprenyl-4-hydroxy benzoate to 2-octaprenylphenol, an intermediate step in ubiquinone biosynthesis. In Alcanivorax borkumensis (strain ATCC 700651 / DSM 11573 / NCIMB 13689 / SK2), this protein is 3-octaprenyl-4-hydroxybenzoate carboxy-lyase.